Consider the following 224-residue polypeptide: Flagellar L-ring protein (224 aa).

The N-terminal stretch at 1–15 (MARYLLLASTLLLAA) is a signal peptide. Cys-16 is lipidated: N-palmitoyl cysteine. A lipid anchor (S-diacylglycerol cysteine) is attached at Cys-16.

This sequence belongs to the FlgH family. The basal body constitutes a major portion of the flagellar organelle and consists of four rings (L,P,S, and M) mounted on a central rod.

It is found in the cell outer membrane. The protein localises to the bacterial flagellum basal body. In terms of biological role, assembles around the rod to form the L-ring and probably protects the motor/basal body from shearing forces during rotation. The polypeptide is Flagellar L-ring protein (Shewanella sp. (strain ANA-3)).